A 277-amino-acid polypeptide reads, in one-letter code: Phosphonoacetaldehyde hydrolase-like protein (277 aa).

The protein belongs to the HAD-like hydrolase superfamily. PhnX family.

This chain is Phosphonoacetaldehyde hydrolase-like protein (phnX2), found in Syntrophobacter fumaroxidans (strain DSM 10017 / MPOB).